We begin with the raw amino-acid sequence, 403 residues long: Na(+)/H(+) antiporter NhaA (403 aa).

The next 11 helical transmembrane spans lie at 23-43 (AFFLLLASLAGFVLANSPWAA), 66-86 (VAAWVSDGLMTLFFLVVILEI), 101-121 (VALPLIGAVGGMVVPALTYLL), 132-152 (GWAIPVATDAAFTLPIILALG), 161-181 (AWLMALAIFDDVLGIVVIALF), 184-204 (GSMYWPALLAVVLVTAALIGA), 219-239 (GILLWTALLDSGLHPTLAGVI), 257-277 (WVSSAVTPLVTWIVLPLFGFM), 297-317 (LGIMLGLMLGKPVGVFGATLL), 333-353 (GMLFGLSLLCGIGFTISLFVA), and 363-383 (IAPAKMGIFAGSALSALTGWF).

It belongs to the NhaA Na(+)/H(+) (TC 2.A.33) antiporter family.

It localises to the cell inner membrane. It carries out the reaction Na(+)(in) + 2 H(+)(out) = Na(+)(out) + 2 H(+)(in). Na(+)/H(+) antiporter that extrudes sodium in exchange for external protons. This Gluconobacter oxydans (strain 621H) (Gluconobacter suboxydans) protein is Na(+)/H(+) antiporter NhaA.